Consider the following 132-residue polypeptide: Large ribosomal subunit protein uL14 (132 aa).

It belongs to the universal ribosomal protein uL14 family. Part of the 50S ribosomal subunit. Forms a cluster with proteins L3 and L24e, part of which may contact the 16S rRNA in 2 intersubunit bridges.

In terms of biological role, binds to 23S rRNA. Forms part of two intersubunit bridges in the 70S ribosome. This Methanobrevibacter smithii (strain ATCC 35061 / DSM 861 / OCM 144 / PS) protein is Large ribosomal subunit protein uL14.